A 449-amino-acid polypeptide reads, in one-letter code: Heterogeneous nuclear ribonucleoprotein H2 (449 aa).

An N-acetylmethionine modification is found at Met1. At Met2 the chain carries N-acetylmethionine; in Heterogeneous nuclear ribonucleoprotein H2, N-terminally processed. The RRM 1 domain maps to 11-90; sequence FVVKVRGLPW…RYVEVFKSNS (80 aa). At Ser23 the chain carries Phosphoserine. Lys35 is covalently cross-linked (Glycyl lysine isopeptide (Lys-Gly) (interchain with G-Cter in SUMO2)). Phosphoserine is present on residues Ser54 and Ser63. A Glycyl lysine isopeptide (Lys-Gly) (interchain with G-Cter in SUMO2) cross-link involves residue Lys87. Phosphoserine is present on Ser90. Lys98 is covalently cross-linked (Glycyl lysine isopeptide (Lys-Gly) (interchain with G-Cter in SUMO2)). The region spanning 111–188 is the RRM 2 domain; the sequence is GFVRLRGLPF…RYIEIFKSSR (78 aa). Position 233 is a dimethylated arginine; alternate (Arg233). Arg233 is modified (omega-N-methylarginine; alternate). Residues 234–249 form a 1-1 repeat; that stretch reads GAYGGGYGGYDDYGGY. The segment at 234–433 is 2 X 16 AA Gly-rich approximate repeats; it reads GAYGGGYGGY…YGGQSSMSGY (200 aa). Tyr246 bears the Phosphotyrosine mark. In terms of domain architecture, RRM 3 spans 289–364; it reads HCVHMRGLPY…RYVELFLNST (76 aa). Ser310 bears the Phosphoserine mark. 3 tandem repeats follow at residues 354 to 372, 374 to 392, and 418 to 433. A 2 X 19 AA perfect repeats region spans residues 354–392; the sequence is HRYVELFLNSTAGTSGGAYDHSYVELFLNSTAGASGGAY.

Component of a ribonucleoprotein complex containing mRNAs and RNA-binding proteins including DDX5, HNRNPH2 and SRSF1 as well as splicing regulator ARVCF. Interacts with TXNL4/DIM1.

The protein resides in the nucleus. It is found in the nucleoplasm. In terms of biological role, this protein is a component of the heterogeneous nuclear ribonucleoprotein (hnRNP) complexes which provide the substrate for the processing events that pre-mRNAs undergo before becoming functional, translatable mRNAs in the cytoplasm. Binds poly(RG). The polypeptide is Heterogeneous nuclear ribonucleoprotein H2 (Hnrnph2) (Rattus norvegicus (Rat)).